Consider the following 212-residue polypeptide: Methylthioribulose-1-phosphate dehydratase (212 aa).

Positions 97 and 99 each coordinate Zn(2+).

This sequence belongs to the aldolase class II family. MtnB subfamily. Homotetramer. Requires Zn(2+) as cofactor.

It catalyses the reaction 5-(methylsulfanyl)-D-ribulose 1-phosphate = 5-methylsulfanyl-2,3-dioxopentyl phosphate + H2O. It participates in amino-acid biosynthesis; L-methionine biosynthesis via salvage pathway; L-methionine from S-methyl-5-thio-alpha-D-ribose 1-phosphate: step 2/6. In terms of biological role, catalyzes the dehydration of methylthioribulose-1-phosphate (MTRu-1-P) into 2,3-diketo-5-methylthiopentyl-1-phosphate (DK-MTP-1-P). The sequence is that of Methylthioribulose-1-phosphate dehydratase from Bacillus thuringiensis (strain Al Hakam).